The primary structure comprises 329 residues: 3-dehydroquinate synthase (329 aa).

The protein belongs to the archaeal-type DHQ synthase family.

It carries out the reaction 2-amino-2,3,7-trideoxy-D-lyxo-hept-6-ulosonate + NAD(+) + H2O = 3-dehydroquinate + NH4(+) + NADH + H(+). Catalyzes the oxidative deamination and cyclization of 2-amino-3,7-dideoxy-D-threo-hept-6-ulosonic acid (ADH) to yield 3-dehydroquinate (DHQ), which is fed into the canonical shikimic pathway of aromatic amino acid biosynthesis. This chain is 3-dehydroquinate synthase, found in Methanoregula boonei (strain DSM 21154 / JCM 14090 / 6A8).